The primary structure comprises 324 residues: Adenine deaminase (324 aa).

Residues His-11, His-13, and His-189 each contribute to the Zn(2+) site. Residue Glu-192 is the Proton donor of the active site. Zn(2+) is bound at residue Asp-270. Residue Asp-271 participates in substrate binding.

This sequence belongs to the metallo-dependent hydrolases superfamily. Adenosine and AMP deaminases family. Adenine deaminase type 2 subfamily. Zn(2+) is required as a cofactor.

The catalysed reaction is adenine + H2O + H(+) = hypoxanthine + NH4(+). In terms of biological role, catalyzes the hydrolytic deamination of adenine to hypoxanthine. Plays an important role in the purine salvage pathway and in nitrogen catabolism. This Sinorhizobium fredii (strain NBRC 101917 / NGR234) protein is Adenine deaminase.